The following is a 291-amino-acid chain: Gamma-sarcoglycan (291 aa).

The chain crosses the membrane as a helical; Signal-anchor for type II membrane protein span at residues 38-58 (LFVLLLLIILLVNFALTIWIL). The Extracellular portion of the chain corresponds to 59–291 (KVMWFSPTGM…TCHEHSHICL (233 aa)). The N-linked (GlcNAc...) asparagine glycan is linked to Asn110. Cystine bridges form between Cys265–Cys290 and Cys267–Cys283.

The protein belongs to the sarcoglycan beta/delta/gamma/zeta family. In terms of assembly, interacts with the syntrophin SNTA1. Cross-link to form 2 major subcomplexes: one consisting of SGCB, SGCD and SGCG and the other consisting of SGCB and SGCD. The association between SGCB and SGCG is particularly strong while SGCA is loosely associated with the other sarcoglycans. Interacts with FLNC. Disulfide bonds are present.

The protein localises to the cell membrane. Its subcellular location is the sarcolemma. It localises to the cytoplasm. The protein resides in the cytoskeleton. In terms of biological role, component of the sarcoglycan complex, a subcomplex of the dystrophin-glycoprotein complex which forms a link between the F-actin cytoskeleton and the extracellular matrix. The polypeptide is Gamma-sarcoglycan (SGCG) (Canis lupus familiaris (Dog)).